The sequence spans 280 residues: MADSTGPISLTVHGAAGRMGRRVVALGLADPNFQLVGAIDHAKSDHLGQDSGAVAGEAPSGIEISSHWPVLDDAATNQAVIDFSLPEAIDGCVEHCVKVGSPLVVATTGLSDEQKQNLSEAAASIPVVWAPSMSLAVNLSMKIAEQITAALKDVAGGLDVEILERHHRFKADAPSGTALKFGELIAGQLGESTSHVHGREGHTGARTREEIGYHAIRVGDNPGEHTIVFGMLGEKIELNVAASNRDCYASGALAAAKWLIHQKKGPGLYSMFDVLGMSDN.

NAD(+) contacts are provided by residues 14–19 (GAAGRM), Asp40, 106–108 (ATT), and 130–133 (APSM). Residue His166 is the Proton donor/acceptor of the active site. His167 is a (S)-2,3,4,5-tetrahydrodipicolinate binding site. The Proton donor role is filled by Lys170. 176–177 (GT) is a binding site for (S)-2,3,4,5-tetrahydrodipicolinate.

The protein belongs to the DapB family.

It is found in the cytoplasm. The catalysed reaction is (S)-2,3,4,5-tetrahydrodipicolinate + NAD(+) + H2O = (2S,4S)-4-hydroxy-2,3,4,5-tetrahydrodipicolinate + NADH + H(+). It carries out the reaction (S)-2,3,4,5-tetrahydrodipicolinate + NADP(+) + H2O = (2S,4S)-4-hydroxy-2,3,4,5-tetrahydrodipicolinate + NADPH + H(+). It participates in amino-acid biosynthesis; L-lysine biosynthesis via DAP pathway; (S)-tetrahydrodipicolinate from L-aspartate: step 4/4. In terms of biological role, catalyzes the conversion of 4-hydroxy-tetrahydrodipicolinate (HTPA) to tetrahydrodipicolinate. In Rhodopirellula baltica (strain DSM 10527 / NCIMB 13988 / SH1), this protein is 4-hydroxy-tetrahydrodipicolinate reductase.